The sequence spans 498 residues: Guanosine-5'-triphosphate,3'-diphosphate pyrophosphatase (498 aa).

The protein belongs to the GppA/Ppx family. GppA subfamily.

The enzyme catalyses guanosine 3'-diphosphate 5'-triphosphate + H2O = guanosine 3',5'-bis(diphosphate) + phosphate + H(+). It functions in the pathway purine metabolism; ppGpp biosynthesis; ppGpp from GTP: step 2/2. Its function is as follows. Catalyzes the conversion of pppGpp to ppGpp. Guanosine pentaphosphate (pppGpp) is a cytoplasmic signaling molecule which together with ppGpp controls the 'stringent response', an adaptive process that allows bacteria to respond to amino acid starvation, resulting in the coordinated regulation of numerous cellular activities. This chain is Guanosine-5'-triphosphate,3'-diphosphate pyrophosphatase, found in Pectobacterium carotovorum subsp. carotovorum (strain PC1).